The primary structure comprises 121 residues: Large ribosomal subunit protein uL18 (121 aa).

Belongs to the universal ribosomal protein uL18 family. Part of the 50S ribosomal subunit; part of the 5S rRNA/L5/L18/L25 subcomplex. Contacts the 5S and 23S rRNAs.

This is one of the proteins that bind and probably mediate the attachment of the 5S RNA into the large ribosomal subunit, where it forms part of the central protuberance. This Polaromonas naphthalenivorans (strain CJ2) protein is Large ribosomal subunit protein uL18.